A 264-amino-acid polypeptide reads, in one-letter code: MRAYHDLLTRILSEGVRKEDRTGTGTLSVFGHQMRFDLADGFPLVTTKQLHLRSIIHELLWFLKGDTNVAYLKENGVTIWDEWADANGDLGPVYGKQWRSWAKPEGGTVDQIAWILDEIARNPDSRRLIVSAWNPADLDRMALAPCHCLFQFYVADGRLSCQLYQRSADAFLGVPFNIASYALLTAMMAQVTGLKAGDFVHTFGDAHLYANHLEQTHLQLSREPRPLPRLRLNPEVRSLFDFRFEDIVIEGYEPHPAIKAPVAV.

Arg-21 is a binding site for dUMP. (6R)-5,10-methylene-5,6,7,8-tetrahydrofolate is bound at residue His-51. 126–127 (RR) provides a ligand contact to dUMP. Catalysis depends on Cys-146, which acts as the Nucleophile. Residues 166–169 (RSAD), Asn-177, and 207–209 (HLY) contribute to the dUMP site. Asp-169 contributes to the (6R)-5,10-methylene-5,6,7,8-tetrahydrofolate binding site. (6R)-5,10-methylene-5,6,7,8-tetrahydrofolate is bound at residue Ala-263.

It belongs to the thymidylate synthase family. Bacterial-type ThyA subfamily. As to quaternary structure, homodimer.

Its subcellular location is the cytoplasm. It catalyses the reaction dUMP + (6R)-5,10-methylene-5,6,7,8-tetrahydrofolate = 7,8-dihydrofolate + dTMP. The protein operates within pyrimidine metabolism; dTTP biosynthesis. Functionally, catalyzes the reductive methylation of 2'-deoxyuridine-5'-monophosphate (dUMP) to 2'-deoxythymidine-5'-monophosphate (dTMP) while utilizing 5,10-methylenetetrahydrofolate (mTHF) as the methyl donor and reductant in the reaction, yielding dihydrofolate (DHF) as a by-product. This enzymatic reaction provides an intracellular de novo source of dTMP, an essential precursor for DNA biosynthesis. This chain is Thymidylate synthase, found in Methylorubrum extorquens (strain CM4 / NCIMB 13688) (Methylobacterium extorquens).